We begin with the raw amino-acid sequence, 594 residues long: MASSTPSSSATSSNAGADPNTTNLRPTTYDTWCGVAHGCTRKLGLKICGFLQRTNSLEEKSRLVSAFKERQSSKNLLSCENSDRDARFRRTETDFSNLFARDLLPAKNGEEQTVQFLLEVVDILLNYVRKTFDRSTKVLDFHHPHQLLEGMEGFNLELSDHPESLEQILVDCRDTLKYGVRTGHPRFFNQLSTGLDIIGLAGEWLTSTANTNMFTYEIAPVFVLMEQITLKKMREIIGWSSKDGDGIFSPGGAISNMYSIMAARYKYFPEVKTKGMAAVPKLVLFTSEQSHYSIKKAGAALGFGTDNVILIKCNERGKIIPADFEAKILEAKQKGYVPFYVNATAGTTVYGAFDPIQEIADICEKYNLWLHVDAAWGGGLLMSRKHRHKLNGIERANSVTWNPHKMMGVLLQCSAILIKEKGILQGCNQMCAGYLFQPDKQYDVSYDTGDKAIQCGRHVDIFKFWLMWKAKGTVGFESQINKCLELAEYLYAKIKNREEFEMVFNGEPEHTNVCFWYIPQSLRGVPDSPQRREKLHKVAPKIKALMMESGTTMVGYQPQGDKANFFRMVISNPAATQSDIDFLIEEIERLGQDL.

Low complexity predominate over residues M1 to S13. The tract at residues M1 to N23 is disordered. S78 carries the post-translational modification Phosphoserine. Q190–S192 contributes to the 4-aminobutanoate binding site. K405 is modified (N6-(pyridoxal phosphate)lysine). R567 is a binding site for 4-aminobutanoate.

This sequence belongs to the group II decarboxylase family. Homodimer. The cofactor is pyridoxal 5'-phosphate.

The enzyme catalyses L-glutamate + H(+) = 4-aminobutanoate + CO2. In terms of biological role, catalyzes the synthesis of the inhibitory neurotransmitter gamma-aminobutyric acid (GABA) with pyridoxal 5'-phosphate as cofactor. The polypeptide is Glutamate decarboxylase 1 (GAD1) (Pan troglodytes (Chimpanzee)).